Reading from the N-terminus, the 528-residue chain is Calcium-dependent protein kinase 17 (528 aa).

Residues 1–65 (MGNCCSHGRD…GPIGPVLGRP (65 aa)) form a disordered region. Gly2 is lipidated: N-myristoyl glycine. Low complexity predominate over residues 20–45 (NGASASNAANSTGPTAEASVPQSKHA). A Protein kinase domain is found at 73 to 331 (YSLGKELGRG…AAQVLNHPWI (259 aa)). ATP is bound by residues 79–87 (LGRGQFGVT) and Lys102. Asp197 acts as the Proton acceptor in catalysis. Ser237 is modified (phosphoserine). The autoinhibitory domain stretch occupies residues 337–367 (APDVPLDNAVMSRLKQFKAMNNFKKVALRVI). EF-hand domains follow at residues 374–409 (EEIMGLKEMFKGMDTDSSGTITLEELRQGLAKQGTR), 410–445 (LSEYEVQQLMEAADADGNGTIDYGEFIAATMHINRL), 446–481 (DREEHLYSAFQHFDKDNSGYITMEELEQALREFGMN), and 485–516 (DIKEIISEVDGDNDGRINYDEFVAMMRKGNPD). Positions 387, 389, 391, 393, 398, 423, 425, 427, 429, 434, 459, 461, 463, 465, 470, 494, 496, 498, 500, and 505 each coordinate Ca(2+).

The protein belongs to the protein kinase superfamily. Ser/Thr protein kinase family. CDPK subfamily.

It localises to the membrane. It carries out the reaction L-seryl-[protein] + ATP = O-phospho-L-seryl-[protein] + ADP + H(+). The enzyme catalyses L-threonyl-[protein] + ATP = O-phospho-L-threonyl-[protein] + ADP + H(+). Activated by calcium. Autophosphorylation may play an important role in the regulation of the kinase activity. Functionally, may play a role in signal transduction pathways that involve calcium as a second messenger. The polypeptide is Calcium-dependent protein kinase 17 (CPK17) (Arabidopsis thaliana (Mouse-ear cress)).